The chain runs to 110 residues: Large ribosomal subunit protein uL22 (110 aa).

Belongs to the universal ribosomal protein uL22 family. In terms of assembly, part of the 50S ribosomal subunit.

This protein binds specifically to 23S rRNA; its binding is stimulated by other ribosomal proteins, e.g. L4, L17, and L20. It is important during the early stages of 50S assembly. It makes multiple contacts with different domains of the 23S rRNA in the assembled 50S subunit and ribosome. Its function is as follows. The globular domain of the protein is located near the polypeptide exit tunnel on the outside of the subunit, while an extended beta-hairpin is found that lines the wall of the exit tunnel in the center of the 70S ribosome. The protein is Large ribosomal subunit protein uL22 of Hahella chejuensis (strain KCTC 2396).